We begin with the raw amino-acid sequence, 535 residues long: Dimethylaniline monooxygenase [N-oxide-forming] 2 (535 aa).

Ala2 is subject to N-acetylalanine. FAD is bound by residues 9–13, Glu32, 40–41, and 61–62; these read GAGVS, VW, and NT. NADP(+)-binding positions include 60-61 and 195-198; these read TN and SGSD. Lys492 is covalently cross-linked (Glycyl lysine isopeptide (Lys-Gly) (interchain with G-Cter in SUMO)). The helical transmembrane segment at 510-530 threads the bilayer; that stretch reads FPVSFLLKILGLVAVVVAFFC.

The protein belongs to the FMO family. The cofactor is FAD. Mg(2+) is required as a cofactor.

It is found in the microsome membrane. It localises to the endoplasmic reticulum membrane. The enzyme catalyses N,N-dimethylaniline + NADPH + O2 + H(+) = N,N-dimethylaniline N-oxide + NADP(+) + H2O. Catalyzes the oxidative metabolism of numerous xenobiotics, including mainly therapeutic drugs and insecticides that contain a soft nucleophile, most commonly nitrogen and sulfur and participates to their bioactivation. The polypeptide is Dimethylaniline monooxygenase [N-oxide-forming] 2 (Macaca mulatta (Rhesus macaque)).